We begin with the raw amino-acid sequence, 286 residues long: uncharacterized protein (286 aa).

This is an uncharacterized protein from Acidianus convivator (ATV).